The primary structure comprises 186 residues: Peptidyl-tRNA hydrolase (186 aa).

Y14 lines the tRNA pocket. The active-site Proton acceptor is H19. Residues F65, N67, and N113 each contribute to the tRNA site.

Belongs to the PTH family. Monomer.

The protein localises to the cytoplasm. It catalyses the reaction an N-acyl-L-alpha-aminoacyl-tRNA + H2O = an N-acyl-L-amino acid + a tRNA + H(+). Functionally, hydrolyzes ribosome-free peptidyl-tRNAs (with 1 or more amino acids incorporated), which drop off the ribosome during protein synthesis, or as a result of ribosome stalling. In terms of biological role, catalyzes the release of premature peptidyl moieties from peptidyl-tRNA molecules trapped in stalled 50S ribosomal subunits, and thus maintains levels of free tRNAs and 50S ribosomes. This Limosilactobacillus fermentum (strain NBRC 3956 / LMG 18251) (Lactobacillus fermentum) protein is Peptidyl-tRNA hydrolase.